The primary structure comprises 590 residues: Rho GTPase-activating protein 36 (590 aa).

Residues 214-414 form the Rho-GAP domain; the sequence is MSLNPIAQQI…AMIDNWDILF (201 aa). The disordered stretch occupies residues 526 to 590; the sequence is IPNNEDTDSD…KGKFATRFFP (65 aa).

May interacts (via the Rho-GAP domain) with the active form of RAC1.

Functionally, GTPase activator for the Rho-type GTPases by converting them to an inactive GDP-bound state. This Mus musculus (Mouse) protein is Rho GTPase-activating protein 36 (Arhgap36).